A 78-amino-acid polypeptide reads, in one-letter code: Putative gastrointestinal growth factor xP1 (78 aa).

A signal peptide spans 1–23; it reads MNYKVFCLVAIALIVGSIGSANG. Residues 30–73 form the P-type domain; it reads EQCSVERLARVNCGYSGITPQECTKQGCCFDSTIQDAPWCFYPR. 3 disulfide bridges follow: Cys-32-Cys-58, Cys-42-Cys-57, and Cys-52-Cys-69.

In terms of tissue distribution, stomach mucosa.

It localises to the secreted. In terms of biological role, may act as a growth factor. This is Putative gastrointestinal growth factor xP1 (p1) from Xenopus laevis (African clawed frog).